The chain runs to 326 residues: MPSVRASDPKQQLYPIAELEQLSQEDVRNIAKTHRSPTLLRTQTKFCVGRRGELSYDTTLAPLQYSEPGDSILRGSDKQDGNDSSLSILSRLWCYGVSRRKAQASEIDSELVARGISKVLEDSHAKLDGFGSHQLYDSQTYNDYYSRSAGNQISERGEGGERSNLFIAVHKPRHPQSYQPVSDPSVLAGYESVRERRDVFRFGGGTNFEQGGSTENRGNYSEIPELTLLNYEQGTHSSLITERDGYKFWSGMSICETIYTATRDEIEEYELSRGIHSVPNIIELRQRLRRRSHRNYDANHSTSGEEENSGSRSRIAELSQSTIHRR.

Residues 293 to 326 (HRNYDANHSTSGEEENSGSRSRIAELSQSTIHRR) form a disordered region.

This is an uncharacterized protein from Oryza latifolia (Indian wild rice).